The primary structure comprises 202 residues: ATP-dependent Clp protease proteolytic subunit (202 aa).

The active-site Nucleophile is the serine 106. Histidine 131 is an active-site residue.

It belongs to the peptidase S14 family. In terms of assembly, fourteen ClpP subunits assemble into 2 heptameric rings which stack back to back to give a disk-like structure with a central cavity, resembling the structure of eukaryotic proteasomes.

It is found in the cytoplasm. The catalysed reaction is Hydrolysis of proteins to small peptides in the presence of ATP and magnesium. alpha-casein is the usual test substrate. In the absence of ATP, only oligopeptides shorter than five residues are hydrolyzed (such as succinyl-Leu-Tyr-|-NHMec, and Leu-Tyr-Leu-|-Tyr-Trp, in which cleavage of the -Tyr-|-Leu- and -Tyr-|-Trp bonds also occurs).. Cleaves peptides in various proteins in a process that requires ATP hydrolysis. Has a chymotrypsin-like activity. Plays a major role in the degradation of misfolded proteins. In Methylibium petroleiphilum (strain ATCC BAA-1232 / LMG 22953 / PM1), this protein is ATP-dependent Clp protease proteolytic subunit.